Consider the following 714-residue polypeptide: Elongation factor G-like protein (714 aa).

One can recognise a tr-type G domain in the interval 21-289 (GGVRNVVLVG…VATRGFPSPM (269 aa)). Residues 30–37 (GPSGGGKT) are G1. 30-37 (GPSGGGKT) contacts GTP. The tract at residues 73 to 77 (QRSVG) is G2. The interval 94–97 (DTPG) is G3. GTP is bound by residues 94–98 (DTPGY) and 148–151 (TKLD). Residues 148–151 (TKLD) form a G4 region. Residues 267–269 (CSS) are G5.

The protein belongs to the TRAFAC class translation factor GTPase superfamily. Classic translation factor GTPase family. EF-G/EF-2 subfamily.

The sequence is that of Elongation factor G-like protein from Mycobacterium tuberculosis (strain ATCC 25618 / H37Rv).